We begin with the raw amino-acid sequence, 48 residues long: MKNTKKITLACQVCLAKNYSTNKSVTNRLEIKKFCKHCNMQTLHKEEK.

It belongs to the bacterial ribosomal protein bL33 family.

The chain is Large ribosomal subunit protein bL33A from Metamycoplasma arthritidis (strain 158L3-1) (Mycoplasma arthritidis).